A 286-amino-acid polypeptide reads, in one-letter code: MVGAAILESPGEGIGSNSILSQKRQLSSSDAAKRDAKKRSTMLMDLEILDCPICYEAFTIPIFQCDNGHLACSSCCPKLNNKCPACTSPVGHNRCRAMESVLESILIPCPNAKLGCKKNVSYGKELTHEKECMFSHCACPALDCNYTSSYKDLYTHYRITHMEINQINTFICDIPLSVRMNISKKILIRTEHLTNHLFAVQCFREPYGVYVTVSCIAPSSPELSQYSYALSYTVDGHTVIYQSPEVKRVLKLSFQTPQENFMLIPNSLLRGDVLEMRISVKKLNKE.

The segment at 51-87 adopts an RING-type zinc-finger fold; that stretch reads CPICYEAFTIPIFQCDNGHLACSSCCPKLNNKCPACT. Residues 101–285 form an SBD region; the sequence is VLESILIPCP…MRISVKKLNK (185 aa). The SIAH-type zinc-finger motif lies at 104-162; sequence SILIPCPNAKLGCKKNVSYGKELTHEKECMFSHCACPALDCNYTSSYKDLYTHYRITHM. Zn(2+)-binding residues include Cys-109, Cys-116, His-128, Cys-132, Cys-139, Cys-144, His-156, and His-161.

It belongs to the SINA (Seven in absentia) family.

It catalyses the reaction S-ubiquitinyl-[E2 ubiquitin-conjugating enzyme]-L-cysteine + [acceptor protein]-L-lysine = [E2 ubiquitin-conjugating enzyme]-L-cysteine + N(6)-ubiquitinyl-[acceptor protein]-L-lysine.. It functions in the pathway protein modification; protein ubiquitination. E3 ubiquitin-protein ligase that mediates ubiquitination and subsequent proteasomal degradation of target proteins. E3 ubiquitin ligases accept ubiquitin from an E2 ubiquitin-conjugating enzyme in the form of a thioester and then directly transfers the ubiquitin to targeted substrates. It probably triggers the ubiquitin-mediated degradation of different substrates. In Arabidopsis thaliana (Mouse-ear cress), this protein is E3 ubiquitin-protein ligase SINA-like 7.